Reading from the N-terminus, the 305-residue chain is Sulfate adenylyltransferase subunit 2 (305 aa).

This sequence belongs to the PAPS reductase family. CysD subfamily. Heterodimer composed of CysD, the smaller subunit, and CysN.

The enzyme catalyses sulfate + ATP + H(+) = adenosine 5'-phosphosulfate + diphosphate. The protein operates within sulfur metabolism; hydrogen sulfide biosynthesis; sulfite from sulfate: step 1/3. In terms of biological role, with CysN forms the ATP sulfurylase (ATPS) that catalyzes the adenylation of sulfate producing adenosine 5'-phosphosulfate (APS) and diphosphate, the first enzymatic step in sulfur assimilation pathway. APS synthesis involves the formation of a high-energy phosphoric-sulfuric acid anhydride bond driven by GTP hydrolysis by CysN coupled to ATP hydrolysis by CysD. This is Sulfate adenylyltransferase subunit 2 from Pseudomonas aeruginosa (strain LESB58).